Here is a 547-residue protein sequence, read N- to C-terminus: Chaperonin GroEL (547 aa).

ATP is bound by residues 30 to 33 (TLGP), Lys51, 87 to 91 (DGTTT), Gly415, and Asp496. The disordered stretch occupies residues 528-547 (KEEPMPMRGSGMGGMGGMDF). Residues 537–547 (SGMGGMGGMDF) are compositionally biased toward gly residues.

This sequence belongs to the chaperonin (HSP60) family. As to quaternary structure, forms a cylinder of 14 subunits composed of two heptameric rings stacked back-to-back. Interacts with the co-chaperonin GroES.

The protein resides in the cytoplasm. It carries out the reaction ATP + H2O + a folded polypeptide = ADP + phosphate + an unfolded polypeptide.. Together with its co-chaperonin GroES, plays an essential role in assisting protein folding. The GroEL-GroES system forms a nano-cage that allows encapsulation of the non-native substrate proteins and provides a physical environment optimized to promote and accelerate protein folding. This chain is Chaperonin GroEL, found in Rickettsia canadensis (strain McKiel).